Consider the following 122-residue polypeptide: Small ribosomal subunit protein uS13 (122 aa).

Residues 95-122 (GLPVHGQRTHTNARTRKGPRRGAVGKKK) form a disordered region.

This sequence belongs to the universal ribosomal protein uS13 family. Part of the 30S ribosomal subunit. Forms a loose heterodimer with protein S19. Forms two bridges to the 50S subunit in the 70S ribosome.

In terms of biological role, located at the top of the head of the 30S subunit, it contacts several helices of the 16S rRNA. In the 70S ribosome it contacts the 23S rRNA (bridge B1a) and protein L5 of the 50S subunit (bridge B1b), connecting the 2 subunits; these bridges are implicated in subunit movement. Contacts the tRNAs in the A and P-sites. This chain is Small ribosomal subunit protein uS13, found in Desulfovibrio desulfuricans (strain ATCC 27774 / DSM 6949 / MB).